The primary structure comprises 703 residues: Methionine--tRNA ligase (703 aa).

The 'HIGH' region signature appears at 15 to 25 (PYANGPVHLGH). Positions 147, 150, 160, and 163 each coordinate Zn(2+). Positions 345–349 (KFSKS) match the 'KMSKS' region motif. K348 is a binding site for ATP. A tRNA-binding domain is found at 602–703 (DFQKIDLRVA…GEGINGNSVS (102 aa)).

Belongs to the class-I aminoacyl-tRNA synthetase family. MetG type 1 subfamily. In terms of assembly, homodimer. Zn(2+) serves as cofactor.

Its subcellular location is the cytoplasm. The enzyme catalyses tRNA(Met) + L-methionine + ATP = L-methionyl-tRNA(Met) + AMP + diphosphate. Functionally, is required not only for elongation of protein synthesis but also for the initiation of all mRNA translation through initiator tRNA(fMet) aminoacylation. In Chlorobaculum tepidum (strain ATCC 49652 / DSM 12025 / NBRC 103806 / TLS) (Chlorobium tepidum), this protein is Methionine--tRNA ligase.